A 766-amino-acid polypeptide reads, in one-letter code: Transcription factor GTE4 (766 aa).

3 disordered regions span residues 87–108, 234–262, and 388–412; these read GTNSHGDKNLTEAPSENLPGDD, RDTTDAQQPAGLTSDSAHATAAGSMPMEE, and GDKLPPAESNKKSKSSSKKQGGDVG. Positions 238-250 are enriched in polar residues; that stretch reads DAQQPAGLTSDSA. The Bromo domain maps to 416–522; sequence GAGTKVFKNC…QIFEERWAVI (107 aa). Disordered regions lie at residues 544 to 606 and 687 to 766; these read TMRS…NKRD and ARAE…SDQT. The segment covering 574-589 has biased composition (low complexity); that stretch reads PTTTPGRTPTSATPSG. Residues 597 to 678 enclose the NET domain; sequence PKANEPNKRD…NYKKGLSKKK (82 aa). Residues 736 to 766 are compositionally biased toward low complexity; the sequence is SRSSSSSSSSSSSSSSDSDSDSSSSSGSDQT.

As to expression, ubiquitously expressed.

It localises to the nucleus. Involved in the activation and maintenance of cell division in the meristems and by this controls cell numbers in differentiated organs. Its action in cell cycle regulation may be directed through the RB-E2F pathway. The polypeptide is Transcription factor GTE4 (GTE4) (Arabidopsis thaliana (Mouse-ear cress)).